An 85-amino-acid chain; its full sequence is Large ribosomal subunit protein bL27 (85 aa).

The interval Met-1–Leu-21 is disordered. Over residues Ser-9–Gln-19 the composition is skewed to polar residues.

It belongs to the bacterial ribosomal protein bL27 family.

This chain is Large ribosomal subunit protein bL27, found in Pectobacterium atrosepticum (strain SCRI 1043 / ATCC BAA-672) (Erwinia carotovora subsp. atroseptica).